A 259-amino-acid chain; its full sequence is Thiazole synthase (259 aa).

Residue Lys-100 is the Schiff-base intermediate with DXP of the active site. 1-deoxy-D-xylulose 5-phosphate is bound by residues Gly-161, 187–188 (AG), and 209–210 (NT).

It belongs to the ThiG family. In terms of assembly, homotetramer. Forms heterodimers with either ThiH or ThiS.

It localises to the cytoplasm. The catalysed reaction is [ThiS sulfur-carrier protein]-C-terminal-Gly-aminoethanethioate + 2-iminoacetate + 1-deoxy-D-xylulose 5-phosphate = [ThiS sulfur-carrier protein]-C-terminal Gly-Gly + 2-[(2R,5Z)-2-carboxy-4-methylthiazol-5(2H)-ylidene]ethyl phosphate + 2 H2O + H(+). It functions in the pathway cofactor biosynthesis; thiamine diphosphate biosynthesis. Catalyzes the rearrangement of 1-deoxy-D-xylulose 5-phosphate (DXP) to produce the thiazole phosphate moiety of thiamine. Sulfur is provided by the thiocarboxylate moiety of the carrier protein ThiS. In vitro, sulfur can be provided by H(2)S. This Halalkalibacterium halodurans (strain ATCC BAA-125 / DSM 18197 / FERM 7344 / JCM 9153 / C-125) (Bacillus halodurans) protein is Thiazole synthase.